Reading from the N-terminus, the 400-residue chain is Bifunctional enzyme IspD/IspF (400 aa).

The interval 1–240 (MQESTMKFGI…EKLSHALPDV (240 aa)) is 2-C-methyl-D-erythritol 4-phosphate cytidylyltransferase. The segment at 241–400 (RTGNGYDVHQ…ATVVYQGRPL (160 aa)) is 2-C-methyl-D-erythritol 2,4-cyclodiphosphate synthase. Positions 247 and 249 each coordinate a divalent metal cation. 4-CDP-2-C-methyl-D-erythritol 2-phosphate is bound by residues 247-249 (DVH) and 273-274 (HS). An a divalent metal cation-binding site is contributed by histidine 281. 4-CDP-2-C-methyl-D-erythritol 2-phosphate is bound by residues 295–297 (DIG), 371–374 (TTNE), phenylalanine 378, and arginine 381.

In the N-terminal section; belongs to the IspD/TarI cytidylyltransferase family. IspD subfamily. It in the C-terminal section; belongs to the IspF family. A divalent metal cation is required as a cofactor.

The catalysed reaction is 2-C-methyl-D-erythritol 4-phosphate + CTP + H(+) = 4-CDP-2-C-methyl-D-erythritol + diphosphate. It carries out the reaction 4-CDP-2-C-methyl-D-erythritol 2-phosphate = 2-C-methyl-D-erythritol 2,4-cyclic diphosphate + CMP. Its pathway is isoprenoid biosynthesis; isopentenyl diphosphate biosynthesis via DXP pathway; isopentenyl diphosphate from 1-deoxy-D-xylulose 5-phosphate: step 2/6. It participates in isoprenoid biosynthesis; isopentenyl diphosphate biosynthesis via DXP pathway; isopentenyl diphosphate from 1-deoxy-D-xylulose 5-phosphate: step 4/6. Bifunctional enzyme that catalyzes the formation of 4-diphosphocytidyl-2-C-methyl-D-erythritol from CTP and 2-C-methyl-D-erythritol 4-phosphate (MEP) (IspD), and catalyzes the conversion of 4-diphosphocytidyl-2-C-methyl-D-erythritol 2-phosphate (CDP-ME2P) to 2-C-methyl-D-erythritol 2,4-cyclodiphosphate (ME-CPP) with a corresponding release of cytidine 5-monophosphate (CMP) (IspF). The polypeptide is Bifunctional enzyme IspD/IspF (Agrobacterium fabrum (strain C58 / ATCC 33970) (Agrobacterium tumefaciens (strain C58))).